The sequence spans 127 residues: Small ribosomal subunit protein uS11 (127 aa).

This sequence belongs to the universal ribosomal protein uS11 family. As to quaternary structure, part of the 30S ribosomal subunit. Interacts with proteins S7 and S18. Binds to IF-3.

Functionally, located on the platform of the 30S subunit, it bridges several disparate RNA helices of the 16S rRNA. Forms part of the Shine-Dalgarno cleft in the 70S ribosome. In Pelodictyon phaeoclathratiforme (strain DSM 5477 / BU-1), this protein is Small ribosomal subunit protein uS11.